A 179-amino-acid chain; its full sequence is Large ribosomal subunit protein uL5 (179 aa).

It belongs to the universal ribosomal protein uL5 family. In terms of assembly, part of the 50S ribosomal subunit; part of the 5S rRNA/L5/L18/L25 subcomplex. Contacts the 5S rRNA and the P site tRNA. Forms a bridge to the 30S subunit in the 70S ribosome.

In terms of biological role, this is one of the proteins that bind and probably mediate the attachment of the 5S RNA into the large ribosomal subunit, where it forms part of the central protuberance. In the 70S ribosome it contacts protein S13 of the 30S subunit (bridge B1b), connecting the 2 subunits; this bridge is implicated in subunit movement. Contacts the P site tRNA; the 5S rRNA and some of its associated proteins might help stabilize positioning of ribosome-bound tRNAs. In Bordetella bronchiseptica (strain ATCC BAA-588 / NCTC 13252 / RB50) (Alcaligenes bronchisepticus), this protein is Large ribosomal subunit protein uL5.